Here is a 282-residue protein sequence, read N- to C-terminus: ATP synthase gamma chain (282 aa).

The protein belongs to the ATPase gamma chain family. In terms of assembly, F-type ATPases have 2 components, CF(1) - the catalytic core - and CF(0) - the membrane proton channel. CF(1) has five subunits: alpha(3), beta(3), gamma(1), delta(1), epsilon(1). CF(0) has three main subunits: a, b and c.

The protein localises to the cell membrane. In terms of biological role, produces ATP from ADP in the presence of a proton gradient across the membrane. The gamma chain is believed to be important in regulating ATPase activity and the flow of protons through the CF(0) complex. The sequence is that of ATP synthase gamma chain from Clostridium acetobutylicum (strain ATCC 824 / DSM 792 / JCM 1419 / IAM 19013 / LMG 5710 / NBRC 13948 / NRRL B-527 / VKM B-1787 / 2291 / W).